The following is a 201-amino-acid chain: Large ribosomal subunit protein bL25 (201 aa).

This sequence belongs to the bacterial ribosomal protein bL25 family. CTC subfamily. As to quaternary structure, part of the 50S ribosomal subunit; part of the 5S rRNA/L5/L18/L25 subcomplex. Contacts the 5S rRNA. Binds to the 5S rRNA independently of L5 and L18.

In terms of biological role, this is one of the proteins that binds to the 5S RNA in the ribosome where it forms part of the central protuberance. This is Large ribosomal subunit protein bL25 from Chlorobaculum parvum (strain DSM 263 / NCIMB 8327) (Chlorobium vibrioforme subsp. thiosulfatophilum).